Here is a 137-residue protein sequence, read N- to C-terminus: Small ribosomal subunit protein uS12 (137 aa).

The segment at 1-20 is disordered; the sequence is MPTTNQLVNRGRTSKVQKQN. Position 102 is a 3-methylthioaspartic acid (aspartate 102).

Belongs to the universal ribosomal protein uS12 family. Part of the 30S ribosomal subunit. Contacts proteins S8 and S17. May interact with IF1 in the 30S initiation complex.

With S4 and S5 plays an important role in translational accuracy. Functionally, interacts with and stabilizes bases of the 16S rRNA that are involved in tRNA selection in the A site and with the mRNA backbone. Located at the interface of the 30S and 50S subunits, it traverses the body of the 30S subunit contacting proteins on the other side and probably holding the rRNA structure together. The combined cluster of proteins S8, S12 and S17 appears to hold together the shoulder and platform of the 30S subunit. This chain is Small ribosomal subunit protein uS12, found in Mycoplasmopsis synoviae (strain 53) (Mycoplasma synoviae).